The primary structure comprises 163 residues: MYISKQPFRKSKQPFRKSKQTFHKSKQPFRKFKQPFRKSKQPFRRRSRIGPGDRIDYRNMSLINRFISEQGKILSRRINRLTLKQQRLITVAIKQARILSFLPFRNYENEKQFQAQAISIITGPRHRKNRHIPQLTQKFNSNRNLRNSNQNLRNNNRNLSSDC.

Disordered regions lie at residues 1-52 (MYIS…IGPG) and 144-163 (NLRN…SSDC). Positions 7-48 (PFRKSKQPFRKSKQTFHKSKQPFRKFKQPFRKSKQPFRRRSR) are enriched in basic residues.

This sequence belongs to the bacterial ribosomal protein bS18 family. Part of the 30S ribosomal subunit.

It is found in the plastid. It localises to the chloroplast. This Sorghum bicolor (Sorghum) protein is Small ribosomal subunit protein bS18c.